The chain runs to 95 residues: Small ribosomal subunit protein uS19 (95 aa).

Residues 76-95 (PTRRFGGHADKKAKKGELKK) are disordered. Basic and acidic residues predominate over residues 82–95 (GHADKKAKKGELKK).

It belongs to the universal ribosomal protein uS19 family.

Functionally, protein S19 forms a complex with S13 that binds strongly to the 16S ribosomal RNA. The chain is Small ribosomal subunit protein uS19 (rpsS) from Thermotoga maritima (strain ATCC 43589 / DSM 3109 / JCM 10099 / NBRC 100826 / MSB8).